Here is a 187-residue protein sequence, read N- to C-terminus: Large ribosomal subunit protein uL6 (187 aa).

A disordered region spans residues 159 to 187 (PYKGKGIRYKGEQLSSNPERLQVRSKEVR).

Belongs to the universal ribosomal protein uL6 family. In terms of assembly, part of the 50S ribosomal subunit.

Its function is as follows. This protein binds to the 23S rRNA, and is important in its secondary structure. It is located near the subunit interface in the base of the L7/L12 stalk, and near the tRNA binding site of the peptidyltransferase center. This Aquifex pyrophilus protein is Large ribosomal subunit protein uL6.